The following is a 394-amino-acid chain: MAKAKFERTKPHVNVGTIGHVDHGKTTLTAAITTVLAKTYGGAASAFDQIDNAPEERERGITISTSHVEYDTPTRHYAHVDCPGHADYVKNMITGAAQMDGAILVVAATDGPMPQTREHILLGRQVGVPFMVVFMNKCDMVDDEELLELVEMEVRELLSEYEFPGDDLPVIQGSALKALEGEEQWEAKIIELAEALDSYIPEPERDIDKPFLLPIEDVFSISGRGTVVTGRVERGIVNTGDAVEIVGMKDTTTSTVTGVEMFRKLLDEGRAGENIGALLRGTKREDVERGQVLAKPGSINPHTQFEAEVYVLSKDEGGRHTPFFKGYRPQFYFRTTDVTGAVELPEGVEMVMPGDNLKFVVELIAPIAMDEGLRFAIREGGRTVGAGVVAKIIA.

In terms of domain architecture, tr-type G spans 10–204 (KPHVNVGTIG…ALDSYIPEPE (195 aa)). The segment at 19 to 26 (GHVDHGKT) is G1. Residue 19–26 (GHVDHGKT) participates in GTP binding. T26 is a binding site for Mg(2+). Residues 60 to 64 (GITIS) are G2. Residues 81-84 (DCPG) form a G3 region. Residues 81–85 (DCPGH) and 136–139 (NKCD) contribute to the GTP site. A G4 region spans residues 136–139 (NKCD). The interval 174–176 (SAL) is G5.

The protein belongs to the TRAFAC class translation factor GTPase superfamily. Classic translation factor GTPase family. EF-Tu/EF-1A subfamily. As to quaternary structure, monomer.

It is found in the cytoplasm. It carries out the reaction GTP + H2O = GDP + phosphate + H(+). Its function is as follows. GTP hydrolase that promotes the GTP-dependent binding of aminoacyl-tRNA to the A-site of ribosomes during protein biosynthesis. The polypeptide is Elongation factor Tu (Pseudoalteromonas atlantica (strain T6c / ATCC BAA-1087)).